Consider the following 682-residue polypeptide: MASPDRSKRKILKAKKTMPLSCRKQVEMLNKSRNVEALKTAIGSNVPSGNQSFSPSVITRTTEITKCSPSENGASSLDSNKNSISEKSKVFSQNCIKPVEEIVHSETKLEQVVCSYQKPSRTTESPSRVFTEEAKDSLNTSENDSEHQTNVTRSLFEHEGACSLKSSCCPPSVLSGVVQMPESTVTSTVGDKKTDQMVFHLETNSNSESHDKRQSDNILCSEDSGFVPVEKTPNLVNSVTSNNCADDILKTDECSRTSISNCESADSTWQSSLDTNNNSHYQKKRMFSENEENVKRMKTSEQINENICVSLERQTAFLEQVRHLIQQEIYSINYELFDKKLKELNQRIGKTECRNKHEGIADKLLAKIAKLQRRIKTVLLFQRNCLKPNMLSSNGASKVANSEAMILDKNLESVNSPIEKSSVNYEPSNPSEKGSKKINLSSDQNKSVSESNNDDVMLISVESPNLTTPITSNPTDTRKITSGNSSNSPNAEVMAVQKKLDSIIDLTKEGLSNCNTESPVSPLESHSKAASNSKETTPLAQNAVQVPESFEHLPPLPEPPAPLPELVDKTRDTLPPQKPELKVKRVFRPNGIALTWNITKINPKCAPVESYHLFLCHENSNNKLIWKKIGEIKALPLPMACTLSQFLASNRYYFTVQSKDIFGRYGPFCDIKSIPGFSENLT.

Residues 120–148 (SRTTESPSRVFTEEAKDSLNTSENDSEHQ) are disordered. Polar residues predominate over residues 137-148 (SLNTSENDSEHQ). Positions 328-378 (EIYSINYELFDKKLKELNQRIGKTECRNKHEGIADKLLAKIAKLQRRIKTV) form a coiled coil. S416 is subject to Phosphoserine. Composition is skewed to polar residues over residues 418 to 451 (IEKSSVNYEPSNPSEKGSKKINLSSDQNKSVSES) and 462 to 490 (ESPNLTTPITSNPTDTRKITSGNSSNSPN). 2 disordered regions span residues 418–491 (IEKS…SPNA) and 513–538 (NCNTESPVSPLESHSKAASNSKETTP). Phosphoserine occurs at positions 488 and 521. Residues 528–538 (KAASNSKETTP) are compositionally biased toward polar residues. The Fibronectin type-III domain maps to 575–680 (PPQKPELKVK…IKSIPGFSEN (106 aa)).

This sequence belongs to the MCAF family. As to quaternary structure, interacts with MBD1, SETDB1 and SP1. Probably forms a complex with SETDB1 and MBD1.

The protein localises to the nucleus. Recruiter that couples transcriptional factors to general transcription apparatus and thereby modulates transcription regulation and chromatin formation. Can both act as an activator or a repressor depending on the context. Mediates MBD1-dependent transcriptional repression, probably by recruiting complexes containing SETDB1. The complex formed with MBD1 and SETDB1 represses transcription and probably couples DNA methylation and histone H3 'Lys-9' trimethylation (H3K9me3) activity. The sequence is that of Activating transcription factor 7-interacting protein 2 (ATF7IP2) from Homo sapiens (Human).